The chain runs to 22 residues: Unknown protein 20 from 2D-PAGE (22 aa).

The chain is Unknown protein 20 from 2D-PAGE from Bombyx mori (Silk moth).